The chain runs to 380 residues: Lipid-A-disaccharide synthase (380 aa).

The protein belongs to the LpxB family.

The enzyme catalyses a lipid X + a UDP-2-N,3-O-bis[(3R)-3-hydroxyacyl]-alpha-D-glucosamine = a lipid A disaccharide + UDP + H(+). The protein operates within bacterial outer membrane biogenesis; LPS lipid A biosynthesis. Functionally, condensation of UDP-2,3-diacylglucosamine and 2,3-diacylglucosamine-1-phosphate to form lipid A disaccharide, a precursor of lipid A, a phosphorylated glycolipid that anchors the lipopolysaccharide to the outer membrane of the cell. The polypeptide is Lipid-A-disaccharide synthase (Photobacterium profundum (strain SS9)).